The chain runs to 95 residues: Large ribosomal subunit protein uL23 (95 aa).

Belongs to the universal ribosomal protein uL23 family. As to quaternary structure, part of the 50S ribosomal subunit. Contacts protein L29, and trigger factor when it is bound to the ribosome.

Its function is as follows. One of the early assembly proteins it binds 23S rRNA. One of the proteins that surrounds the polypeptide exit tunnel on the outside of the ribosome. Forms the main docking site for trigger factor binding to the ribosome. The protein is Large ribosomal subunit protein uL23 of Bacillus subtilis (strain 168).